The following is a 184-amino-acid chain: Inorganic pyrophosphatase (184 aa).

Substrate-binding residues include K19, R33, and Y45. The Mg(2+) site is built by D55, D60, and D92. Residue Y129 participates in substrate binding.

It belongs to the PPase family. Homohexamer. The cofactor is Mg(2+).

It is found in the cytoplasm. The enzyme catalyses diphosphate + H2O = 2 phosphate + H(+). Catalyzes the hydrolysis of inorganic pyrophosphate (PPi) forming two phosphate ions. This chain is Inorganic pyrophosphatase, found in Mycoplasma pneumoniae (strain ATCC 29342 / M129 / Subtype 1) (Mycoplasmoides pneumoniae).